The chain runs to 132 residues: MDLEYPDDLRYLDSHEYVRLDGEIATIGLSAFAIEQLGDIVHLELPEVGEALEKGESFGAIESVKAAEDLYPPVSGTVIDRNEEMIENPDQLADDPYGDGWLIKVRVSNLDAELDDTLSASEYQAQLEGDDD.

The 83-residue stretch at 24 to 106 (IATIGLSAFA…YGDGWLIKVR (83 aa)) folds into the Lipoyl-binding domain. An N6-lipoyllysine modification is found at Lys65.

Belongs to the GcvH family. In terms of assembly, the glycine cleavage system is composed of four proteins: P, T, L and H. The cofactor is (R)-lipoate.

Functionally, the glycine cleavage system catalyzes the degradation of glycine. The H protein shuttles the methylamine group of glycine from the P protein to the T protein. The polypeptide is Glycine cleavage system H protein (Rippkaea orientalis (strain PCC 8801 / RF-1) (Cyanothece sp. (strain PCC 8801))).